A 648-amino-acid chain; its full sequence is DNA mismatch repair protein MutL (648 aa).

The segment at 385 to 430 (STVKGPAVNEPLTENTLNQQKVKTSASTPVVHTGNSVEPKPETSTA) is disordered. Over residues 396-430 (LTENTLNQQKVKTSASTPVVHTGNSVEPKPETSTA) the composition is skewed to polar residues.

The protein belongs to the DNA mismatch repair MutL/HexB family.

Functionally, this protein is involved in the repair of mismatches in DNA. It is required for dam-dependent methyl-directed DNA mismatch repair. May act as a 'molecular matchmaker', a protein that promotes the formation of a stable complex between two or more DNA-binding proteins in an ATP-dependent manner without itself being part of a final effector complex. This is DNA mismatch repair protein MutL from Agathobacter rectalis (strain ATCC 33656 / DSM 3377 / JCM 17463 / KCTC 5835 / VPI 0990) (Eubacterium rectale).